A 274-amino-acid chain; its full sequence is Nickel/cobalt efflux system RcnA (274 aa).

The Periplasmic segment spans residues 1-12; sequence MTEFTTLLQQGN. The chain crosses the membrane as a helical span at residues 13-33; the sequence is AWFFIPSVILLGALHGLEPGH. The Cytoplasmic segment spans residues 34-56; the sequence is SKTMMAAFIIAIKGTIKQAVMLG. A helical membrane pass occupies residues 57–77; that stretch reads LAATISHTAVVWLIAFGGMVI. Topologically, residues 78-86 are periplasmic; sequence SKRFTAQSA. The helical transmembrane segment at 87-107 threads the bilayer; sequence EPWLQLISAVIIISTAFWMFW. At 108-174 the chain is on the cytoplasmic side; it reads RTWRGERNWL…FDGREVTNWQ (67 aa). Residues 127 to 153 form a disordered region; it reads HHHHDHEHHHDHGHHHHHEHGEYQDAH. The segment covering 129–144 has biased composition (basic residues); it reads HHDHEHHHDHGHHHHH. The chain crosses the membrane as a helical span at residues 175–195; it reads ILLFGLTGGLIPCPAAITVLL. Over 196 to 209 the chain is Periplasmic; it reads ICIQLKALTLGATL. Residues 210–230 traverse the membrane as a helical segment; it reads VVSFSIGLALTLVTVGVGAAI. At 231 to 251 the chain is on the cytoplasmic side; the sequence is SVQQVAKRWSGFNTLAKRAPY. The chain crosses the membrane as a helical span at residues 252-272; the sequence is FSSLLIGLVGVYMGVHGFMGI. Residues 273–274 lie on the Periplasmic side of the membrane; sequence MR.

The protein belongs to the NiCoT transporter (TC 2.A.52) family. RcnA subfamily.

The protein resides in the cell inner membrane. Efflux system for nickel and cobalt. This chain is Nickel/cobalt efflux system RcnA (rcnA), found in Escherichia coli O9:H4 (strain HS).